We begin with the raw amino-acid sequence, 495 residues long: ATP synthase subunit beta, chloroplastic (495 aa).

172-179 (GGAGVGKT) is an ATP binding site.

It belongs to the ATPase alpha/beta chains family. F-type ATPases have 2 components, CF(1) - the catalytic core - and CF(0) - the membrane proton channel. CF(1) has five subunits: alpha(3), beta(3), gamma(1), delta(1), epsilon(1). CF(0) has four main subunits: a(1), b(1), b'(1) and c(9-12).

It localises to the plastid. The protein resides in the chloroplast thylakoid membrane. It catalyses the reaction ATP + H2O + 4 H(+)(in) = ADP + phosphate + 5 H(+)(out). In terms of biological role, produces ATP from ADP in the presence of a proton gradient across the membrane. The catalytic sites are hosted primarily by the beta subunits. The polypeptide is ATP synthase subunit beta, chloroplastic (Pteridium aquilinum (Bracken fern)).